Reading from the N-terminus, the 378-residue chain is UDP-N-acetylglucosamine--N-acetylmuramyl-(pentapeptide) pyrophosphoryl-undecaprenol N-acetylglucosamine transferase (378 aa).

UDP-N-acetyl-alpha-D-glucosamine contacts are provided by residues 24–26 (TAG), Asn144, Arg181, Ser215, and Gln310.

The protein belongs to the glycosyltransferase 28 family. MurG subfamily.

The protein resides in the cell membrane. The catalysed reaction is di-trans,octa-cis-undecaprenyl diphospho-N-acetyl-alpha-D-muramoyl-L-alanyl-D-glutamyl-meso-2,6-diaminopimeloyl-D-alanyl-D-alanine + UDP-N-acetyl-alpha-D-glucosamine = di-trans,octa-cis-undecaprenyl diphospho-[N-acetyl-alpha-D-glucosaminyl-(1-&gt;4)]-N-acetyl-alpha-D-muramoyl-L-alanyl-D-glutamyl-meso-2,6-diaminopimeloyl-D-alanyl-D-alanine + UDP + H(+). The protein operates within cell wall biogenesis; peptidoglycan biosynthesis. Cell wall formation. Catalyzes the transfer of a GlcNAc subunit on undecaprenyl-pyrophosphoryl-MurNAc-pentapeptide (lipid intermediate I) to form undecaprenyl-pyrophosphoryl-MurNAc-(pentapeptide)GlcNAc (lipid intermediate II). The chain is UDP-N-acetylglucosamine--N-acetylmuramyl-(pentapeptide) pyrophosphoryl-undecaprenol N-acetylglucosamine transferase from Nocardia farcinica (strain IFM 10152).